The chain runs to 862 residues: Cone cGMP-specific 3',5'-cyclic phosphodiesterase subunit alpha' (862 aa).

2 GAF domains span residues 75–224 and 256–433; these read SMEK…SLVL and DIER…GWSV. Residues S97, N116, 169-172, and T176 each bind 3',5'-cyclic GMP; that span reads DKKT. The 334-residue stretch at 486–819 folds into the PDEase domain; sequence DEKDLIRILK…VEWKTRADEY (334 aa). H562 serves as the catalytic Proton donor. Residues H566, H602, D603, and D723 each coordinate a divalent metal cation. Residues 830-842 are compositionally biased toward basic and acidic residues; sequence KKKEEEAAAKKAE. Residues 830 to 862 form a disordered region; that stretch reads KKKEEEAAAKKAENAAGGGGGGEDGKSKTCIVL. A Cysteine methyl ester modification is found at C859. C859 is lipidated: S-geranylgeranyl cysteine. Residues 860–862 constitute a propeptide, removed in mature form; the sequence is IVL.

Belongs to the cyclic nucleotide phosphodiesterase family. In terms of assembly, composed of two alpha' subunits that are associated with 3 smaller proteins of 11, 13, and 15 kDa. A divalent metal cation serves as cofactor.

It is found in the cell membrane. The catalysed reaction is 3',5'-cyclic GMP + H2O = GMP + H(+). As cone-specific cGMP phosphodiesterase, it plays an essential role in light detection and cone phototransduction by rapidly decreasing intracellular levels of cGMP. The sequence is that of Cone cGMP-specific 3',5'-cyclic phosphodiesterase subunit alpha' (PDE6C) from Gallus gallus (Chicken).